The sequence spans 427 residues: Putative acyl-CoA thioester hydrolase YbhC (427 aa).

The signal sequence occupies residues Met-1–Ala-21. Cys-22 is lipidated: N-palmitoyl cysteine. Cys-22 is lipidated: S-diacylglycerol cysteine. Residues Ser-23 to Arg-42 form a disordered region. Cys-185 and Cys-197 form a disulfide bridge. Residue Asp-285 is the Nucleophile of the active site. Residue Arg-345 participates in substrate binding.

Belongs to the pectinesterase family.

The protein localises to the cell outer membrane. Its function is as follows. Putative thioesterase. Does not bind pectin, and has no pectinesterase activity. The protein is Putative acyl-CoA thioester hydrolase YbhC (ybhC) of Escherichia coli (strain K12).